Here is a 302-residue protein sequence, read N- to C-terminus: Recombination-associated protein RdgC (302 aa).

Belongs to the RdgC family.

The protein localises to the cytoplasm. The protein resides in the nucleoid. Functionally, may be involved in recombination. In Haemophilus influenzae (strain PittGG), this protein is Recombination-associated protein RdgC.